Here is a 185-residue protein sequence, read N- to C-terminus: MELVVTSRETGKKSFLKKIRQQGGIPAVVYSAGKSLANITVDALVFKKFLSNLESGALSSTVFSLSYEGRIIKALVKDIQYQITTYDVIHLDFEELVEDRPVKLNIPIRCINAVDCIGVKLGGSLRQVIRAVRVVCKPKDIVPFLELDVRSVGLSQTRKLSDIKIPAGIETITPLKEVAITVSRR.

This sequence belongs to the bacterial ribosomal protein bL25 family. CTC subfamily. As to quaternary structure, part of the 50S ribosomal subunit; part of the 5S rRNA/L5/L18/L25 subcomplex. Contacts the 5S rRNA. Binds to the 5S rRNA independently of L5 and L18.

In terms of biological role, this is one of the proteins that binds to the 5S RNA in the ribosome where it forms part of the central protuberance. The sequence is that of Large ribosomal subunit protein bL25 from Chlamydia pneumoniae (Chlamydophila pneumoniae).